The chain runs to 400 residues: MSSKLVLVLNCGSSSLKFAIIDAINGEEYLSGLAECFNLPEARIKWKMDGGKHDAELGAGAAHSEALNFIVNTILSQKPELSAQLVAIGHRIVHGGEKFTQSAIITDDVLQGIKDSVPFAPLHNPAHLIGIEEALKSFPHLADKNVAVFDTAFHQTMPEESYLYALPYKLYKENHIRRYGFHGTSHYFVSREAAKVLNKPVEELNVITCHLGNGGSVTAIRNGECVDTSMGLTPLEGLVMGTRCGDIDPAVIFHLHDALGMDVASINKLLTKESGLQGLTEVTSDCRYVEDNYETKADAKRAMDVYCHRLAKYIGSYSALMEGRLDAVIFTGGIGENAAMVRELSLKKLGLLGFDVDHERNLAARFGKGGNIAKDGTRPALVIPTNEELVIAEDAYRLTA.

Asparagine 10 contributes to the Mg(2+) binding site. Residue lysine 17 participates in ATP binding. Arginine 91 lines the substrate pocket. Aspartate 150 acts as the Proton donor/acceptor in catalysis. Residues 210–214 (HLGNG), 285–287 (DCR), and 333–337 (GIGEN) contribute to the ATP site. Glutamate 387 contacts Mg(2+).

Belongs to the acetokinase family. Homodimer. Mg(2+) is required as a cofactor. Requires Mn(2+) as cofactor.

The protein localises to the cytoplasm. The enzyme catalyses acetate + ATP = acetyl phosphate + ADP. It functions in the pathway metabolic intermediate biosynthesis; acetyl-CoA biosynthesis; acetyl-CoA from acetate: step 1/2. Its function is as follows. Catalyzes the formation of acetyl phosphate from acetate and ATP. Can also catalyze the reverse reaction. The chain is Acetate kinase from Pectobacterium carotovorum subsp. carotovorum (strain PC1).